The sequence spans 694 residues: Long-chain-fatty-acid--CoA ligase 4 (694 aa).

A disordered region spans residues 1–21 (MTEQYSVAVGEAANEHETAPR). Residue 269 to 280 (YTSGSTGTPKGV) participates in ATP binding. An FACS motif is present at residues 527 to 576 (DGWFRTGDIAEWTPKGQVKIIDRKKNLVKTLNGEYIALEKLESIYRSNPY).

Belongs to the ATP-dependent AMP-binding enzyme family. Interacts with FAT1. Mg(2+) is required as a cofactor.

It localises to the lipid droplet. It catalyses the reaction a long-chain fatty acid + ATP + CoA = a long-chain fatty acyl-CoA + AMP + diphosphate. It carries out the reaction (9Z)-hexadecenoate + ATP + CoA = (9Z)-hexadecenoyl-CoA + AMP + diphosphate. The enzyme catalyses (9Z)-octadecenoate + ATP + CoA = (9Z)-octadecenoyl-CoA + AMP + diphosphate. The catalysed reaction is hexadecanoate + ATP + CoA = hexadecanoyl-CoA + AMP + diphosphate. Its function is as follows. Activates long-chain fatty acids (LCFA) by esterification of the fatty acids into metabolically active CoA-thioesters for subsequent degradation or incorporation into phospholipids. Also facilitates the transport of LCFAs into the cell, either by active transport or by decreasing the intracellular LCFA concentration. Contributes, with FAA1, to the activation of imported myristate. Also involved in long-chain base (LCB) uptake. In contrast ot LCFA uptake, LCB uptake does not require ATP, suggesting that the enzyme is directly involved in LCB uptake. Involved in the sphingolipid-to-glycerolipid metabolic pathway, converting the sphingolipid metabolite hexadecenoic acid to hexadecenoyl-CoA, which is then further converted to glycerolipids. This is Long-chain-fatty-acid--CoA ligase 4 (FAA4) from Saccharomyces cerevisiae (strain ATCC 204508 / S288c) (Baker's yeast).